Consider the following 125-residue polypeptide: uncharacterized protein (125 aa).

A disordered region spans residues 1-21 (MLFYHCSSFSSSSSSSSSSAS). A compositionally biased stretch (low complexity) spans 7–21 (SSFSSSSSSSSSSAS).

This is an uncharacterized protein from Saccharomyces cerevisiae (strain ATCC 204508 / S288c) (Baker's yeast).